A 92-amino-acid chain; its full sequence is Large ribosomal subunit protein eL43 (92 aa).

A C4-type zinc finger spans residues 39-60 (CEFCGKYAVKRKAVGIWGCKAC).

The protein belongs to the eukaryotic ribosomal protein eL43 family.

This is Large ribosomal subunit protein eL43 (RPL37A) from Gossypium hirsutum (Upland cotton).